Here is a 283-residue protein sequence, read N- to C-terminus: Protoheme IX farnesyltransferase 1 (283 aa).

The next 9 helical transmembrane spans lie at 14-34 (IALM…TKVD), 35-55 (PVAL…SAVF), 84-104 (LGFA…NAAF), 107-127 (VVAL…TVWL), 133-153 (TNII…AAAV), 163-183 (VLAL…AILL), 208-228 (ILAN…LGLL), 231-251 (VYGF…VVLV), and 258-278 (WAGW…IAVF).

Belongs to the UbiA prenyltransferase family. Protoheme IX farnesyltransferase subfamily.

It localises to the cell inner membrane. It catalyses the reaction heme b + (2E,6E)-farnesyl diphosphate + H2O = Fe(II)-heme o + diphosphate. Its pathway is porphyrin-containing compound metabolism; heme O biosynthesis; heme O from protoheme: step 1/1. In terms of biological role, converts heme B (protoheme IX) to heme O by substitution of the vinyl group on carbon 2 of heme B porphyrin ring with a hydroxyethyl farnesyl side group. The protein is Protoheme IX farnesyltransferase 1 of Paramagnetospirillum magneticum (strain ATCC 700264 / AMB-1) (Magnetospirillum magneticum).